The sequence spans 589 residues: Intermediate filament protein ifb-1 (589 aa).

The interval 1–42 is disordered; it reads MSSHKESSEYEMQYRSTIQPRTAVRSQSRQSGNYVSGGNGAG. The head stretch occupies residues 8–84; the sequence is SEYEMQYRST…LEATDKEKKT (77 aa). Positions 14–30 are enriched in polar residues; the sequence is YRSTIQPRTAVRSQSRQ. An IF rod domain is found at 81–433; it reads EKKTLQGLND…KMLEGEETRV (353 aa). Residues 85–116 are coil 1A; the sequence is LQGLNDRLGNYIDRVKKLEEQNRKLVADLDEL. A linker 1 region spans residues 117-130; the sequence is RGKWGKDTSEIKIK. Residues 131-268 are coil 1B; sequence YSESLSTARK…RVHEQEVKEL (138 aa). The linker 12 stretch occupies residues 269-285; that stretch reads QALLAQAPADTREFFKN. A coil 2 region spans residues 286–433; that stretch reads ELALAIRDIK…KMLEGEETRV (148 aa). Residues 434–588 are tail; that stretch reads GLTQMVEQAV…THTQKTIQSG (155 aa). The segment at 444–470 is disordered; it reads KTHSLQQQENTDSTRSVRGEVSTKTTF. The 119-residue stretch at 466 to 584 folds into the LTD domain; it reads TKTTFQRSAK…EERATHTQKT (119 aa).

Belongs to the intermediate filament family. In terms of assembly, forms some heteromeric filaments with ifa-1, ifa-2, ifa-3 and probably ifa-4. Expressed in epidermal cells. Expressed in amphid sensory neurons, the excretory cells, the vulva, the uterus, the rectum and some neurons of the tail. Isoform a and isoform b display a similar pattern of expression. Isoform a is predominant in pharyngeal tonofilaments.

The protein resides in the cytoplasm. Functionally, cytoplasmic intermediate filaments provide mechanical strength to cells. Essential protein, involved in attachment structures in epidermal cells that connect muscles to the external cuticle. Required in morphogenesis and epidermal integrity. Probable component of embryonic epidermal attachment structures. Functions in larval muscle attachment independently of ifa-2. This chain is Intermediate filament protein ifb-1 (ifb-1), found in Caenorhabditis elegans.